An 876-amino-acid polypeptide reads, in one-letter code: MSNERYNARESEPKWQAKWDEAKIFATRNDDLRKKYYVLEMFPYPSGRIHMGHVRNYTMGDVVARTMRARGYNVLHPMGWDAFGLPAENAAIERKIAPKAWTYDNIAAMKKQLQTMGLSLDWAREFATCDPSYYKHQQKMFLDFLKVGLVEREKRKLNWDPVDMTVLANEQVIDGRGWRSGAVVELREMNQWVFKITKYAQELLDALDTLDRWPDKVRLMQRNWIGRSEGLMVRFALDSATTPAGETELKIFTTRPDTLFGAKFMAIAADHPLAQAAAAKDPKVAAFIDDCKKRGTAQAEIDTAEKQGIDTGIRAMHPFDPSWKLPVYVANFVLMEYGTGAIFGCPAHDQRDLDFVNKYQLGNTPVVCPEGQDPASFVITDTAYDGDGRMINSRFLDGMTIVEAKEEVAKRLETAQLGGAPVGERKVNFRLRDWGISRQRYWGCPIPIIHCPTCDVVPVPDADLPVVLPEDVSFDKPGNALDHHPTWKHVTCPKCGGKAVRETDTMDTFVDSSWYFARFTDPWNTEAPTTPDVVNRMMPVDQYIGGVEHAILHLLYSRFFTRAMKAAGHIDIQHDEPFAGLFTQGMVVHETYRKADGHFASPAEISITVEGDTRRATLLDGGSPVEIGPIEKMSKSKRNTVDPDDIIGTYGADTARWFMLSDSPPDRDVIWSEEGVKGASRFVQRLWRMVNDAAPIAASAPAERPASFGADALTLRKAAHGALDKVLSGIERLAFNVSLAHIREFSNTLGDALARSQTPSPDLAWAIRESTVILVQLFHPMMPHLAEECWTVLGQTGLVSEALWPQIEPDLLVEDSITLPVQVNGKKRGEVTVPRDAPTSEIEAAVLALDAVKQALGDKPVRKVIVVPQRIVNVVG.

Positions 43-53 (PYPSGRIHMGH) match the 'HIGH' region motif. Positions 632–636 (KMSKS) match the 'KMSKS' region motif. An ATP-binding site is contributed by K635.

This sequence belongs to the class-I aminoacyl-tRNA synthetase family.

The protein localises to the cytoplasm. The enzyme catalyses tRNA(Leu) + L-leucine + ATP = L-leucyl-tRNA(Leu) + AMP + diphosphate. The polypeptide is Leucine--tRNA ligase (Rhodopseudomonas palustris (strain TIE-1)).